The primary structure comprises 500 residues: Cysteine--tRNA ligase (500 aa).

Cys29 lines the Zn(2+) pocket. The 'HIGH' region motif lies at 31 to 41; sequence VTVYDLCHLGH. Residues Cys213, His238, and Glu242 each coordinate Zn(2+). A 'KMSKS' region motif is present at residues 270 to 274; the sequence is KMSKS. Lys273 contributes to the ATP binding site.

The protein belongs to the class-I aminoacyl-tRNA synthetase family. In terms of assembly, monomer. The cofactor is Zn(2+).

Its subcellular location is the cytoplasm. It catalyses the reaction tRNA(Cys) + L-cysteine + ATP = L-cysteinyl-tRNA(Cys) + AMP + diphosphate. The chain is Cysteine--tRNA ligase from Prochlorococcus marinus (strain NATL2A).